Consider the following 78-residue polypeptide: Acyl carrier protein (78 aa).

Residues 1-76 (MSLEDDVKLI…DVITYIKTRQ (76 aa)) form the Carrier domain. At Ser-36 the chain carries O-(pantetheine 4'-phosphoryl)serine.

Belongs to the acyl carrier protein (ACP) family. In terms of processing, 4'-phosphopantetheine is transferred from CoA to a specific serine of apo-ACP by AcpS. This modification is essential for activity because fatty acids are bound in thioester linkage to the sulfhydryl of the prosthetic group.

The protein resides in the cytoplasm. It participates in lipid metabolism; fatty acid biosynthesis. Its function is as follows. Carrier of the growing fatty acid chain in fatty acid biosynthesis. In Chlamydia felis (strain Fe/C-56) (Chlamydophila felis), this protein is Acyl carrier protein.